Here is a 427-residue protein sequence, read N- to C-terminus: Glutamate-1-semialdehyde 2,1-aminomutase (427 aa).

The residue at position 266 (Lys-266) is an N6-(pyridoxal phosphate)lysine.

Belongs to the class-III pyridoxal-phosphate-dependent aminotransferase family. HemL subfamily. Homodimer. Requires pyridoxal 5'-phosphate as cofactor.

It is found in the cytoplasm. The enzyme catalyses (S)-4-amino-5-oxopentanoate = 5-aminolevulinate. Its pathway is porphyrin-containing compound metabolism; protoporphyrin-IX biosynthesis; 5-aminolevulinate from L-glutamyl-tRNA(Glu): step 2/2. The protein is Glutamate-1-semialdehyde 2,1-aminomutase of Aromatoleum aromaticum (strain DSM 19018 / LMG 30748 / EbN1) (Azoarcus sp. (strain EbN1)).